The primary structure comprises 585 residues: Arginine--tRNA ligase (585 aa).

The short motif at 131–141 is the 'HIGH' region element; sequence ANPTGPMHVGH.

Belongs to the class-I aminoacyl-tRNA synthetase family. In terms of assembly, monomer.

It localises to the cytoplasm. The catalysed reaction is tRNA(Arg) + L-arginine + ATP = L-arginyl-tRNA(Arg) + AMP + diphosphate. This Brucella anthropi (strain ATCC 49188 / DSM 6882 / CCUG 24695 / JCM 21032 / LMG 3331 / NBRC 15819 / NCTC 12168 / Alc 37) (Ochrobactrum anthropi) protein is Arginine--tRNA ligase.